A 1109-amino-acid polypeptide reads, in one-letter code: Coiled-coil domain-containing protein 158 (1109 aa).

Residues 1–12 are compositionally biased toward basic and acidic residues; the sequence is MESKACESKNED. Residues 1–31 are disordered; sequence MESKACESKNEDLLPSGITSKGGSSSPFFVT. Residues 17–31 are compositionally biased toward polar residues; sequence GITSKGGSSSPFFVT. Coiled-coil stretches lie at residues 71-166 and 242-828; these read GKEH…MLKD and VEDQ…QEQE. Disordered regions lie at residues 843–897 and 952–1061; these read LQGP…DPTR and HRSN…TGKT. Composition is skewed to polar residues over residues 862–882, 953–970, and 988–998; these read ASVT…SFLS, RSNN…SSET, and SCFTFTSTASP. The span at 999-1019 shows a compositional bias: low complexity; it reads SGKMSASRSFSSSPKKSPVHS. Composition is skewed to polar residues over residues 1020–1037 and 1043–1061; these read LLTS…QYRS and SPTS…TGKT. Residues 1053–1109 adopt a coiled-coil conformation; the sequence is PSLETTGKTCQKLQNRLESLQTLVEDLQLKNQAMSSMIRNQEKRIQKVKDQEKMLLK.

This chain is Coiled-coil domain-containing protein 158 (Ccdc158), found in Mus musculus (Mouse).